The following is a 162-amino-acid chain: Selenoprotein F (162 aa).

The N-terminal stretch at methionine 1 to alanine 28 is a signal peptide. A non-standard amino acid (selenocysteine) is located at residue selenocysteine 93.

This sequence belongs to the selenoprotein M/F family. In terms of assembly, forms a tight complex with UGGT1/UGCGL1. Interacts with UGGT2/UGCGL2. Interacts with RDH11.

It is found in the endoplasmic reticulum lumen. Functionally, may be involved in redox reactions associated with the formation of disulfide bonds. May contribute to the quality control of protein folding in the endoplasmic reticulum. May regulate protein folding by enhancing the catalytic activity of UGGT1/UGCGL1 and UGGT2/UGCGL2. The protein is Selenoprotein F of Mus musculus (Mouse).